We begin with the raw amino-acid sequence, 215 residues long: Thymidylate kinase (215 aa).

12-19 (GIDGAGKS) serves as a coordination point for ATP.

It belongs to the thymidylate kinase family.

It carries out the reaction dTMP + ATP = dTDP + ADP. Its function is as follows. Phosphorylation of dTMP to form dTDP in both de novo and salvage pathways of dTTP synthesis. This Albidiferax ferrireducens (strain ATCC BAA-621 / DSM 15236 / T118) (Rhodoferax ferrireducens) protein is Thymidylate kinase.